Reading from the N-terminus, the 389-residue chain is MFDALARQADDPLLALIGLFRKDERPGKVDLGVGVYRDETGRTPIFRAVKAAEKRLLETQDSKAYIGPEGDLVFLDRLWELVGGDTIERSHVAGVQTPGGSGALRLAADLIARMGGRGIWLGLPSWPNHAPIFKAAGLDIATYDFFDIPSQSVIFDNLVSALEGAASGDAVLLHASCHNPTGGVLSEAQWMEIAALVAERGLLPLVDLAYQGFGRGLDQDVAGLRHLLGVVPEALVAVSCSKSFGLYRERAGAIFARTSSTASADRVRSNLAGLARTSYSMPPDHGAAVVRTILDDPELRRDWTEELETMRLRMTGLRRSLAEGLRTRWQSLGAVADQEGMFSMLPLSEAEVMRLRTEHGIYMPASGRINIAGLKTAEAAEIAGKFTSL.

K242 is subject to N6-(pyridoxal phosphate)lysine.

Belongs to the class-I pyridoxal-phosphate-dependent aminotransferase family. In terms of assembly, homodimer. The cofactor is pyridoxal 5'-phosphate.

The catalysed reaction is L-tyrosine + 2-oxoglutarate = 3-(4-hydroxyphenyl)pyruvate + L-glutamate. Its pathway is amino-acid degradation; L-phenylalanine degradation; acetoacetate and fumarate from L-phenylalanine: step 2/6. Transaminase involved in tyrosine breakdown. Converts tyrosine to p-hydroxyphenylpyruvate. This is Tyrosine aminotransferase (tatA) from Rhizobium meliloti (strain 1021) (Ensifer meliloti).